We begin with the raw amino-acid sequence, 487 residues long: Anthocyanidin 3-O-glucosyltransferase 5 (487 aa).

His-22 (proton acceptor) is an active-site residue. Residue His-22 coordinates an anthocyanidin. The active-site Charge relay is Asp-119. 6 residues coordinate UDP-alpha-D-glucose: Gln-354, His-369, Trp-372, Asn-373, Ser-374, and Glu-377. Residue Ala-392 participates in an anthocyanidin binding. The UDP-alpha-D-glucose site is built by Glu-393 and Gln-394.

The protein belongs to the UDP-glycosyltransferase family. Faintly expressed in cotyledons.

It carries out the reaction an anthocyanidin + UDP-alpha-D-glucose + H(+) = an anthocyanidin 3-O-beta-D-glucoside + UDP. The protein operates within pigment biosynthesis; anthocyanin biosynthesis. Its function is as follows. In the presence of other necessary color factors, this glycosylation reaction allows the accumulation of anthocyanin pigments. This chain is Anthocyanidin 3-O-glucosyltransferase 5 (GT5), found in Manihot esculenta (Cassava).